Consider the following 106-residue polypeptide: Protamine (106 aa).

The interval 1 to 106 is disordered; the sequence is ARAVRRRRAR…TRRRRRRARR (106 aa).

Sperm.

The protein resides in the nucleus. The protein localises to the chromosome. The sequence is that of Protamine from Phorcus turbinatus (Sea snail).